The chain runs to 146 residues: Cyanate hydratase (146 aa).

Catalysis depends on residues R87, E90, and S113.

This sequence belongs to the cyanase family.

It carries out the reaction cyanate + hydrogencarbonate + 3 H(+) = NH4(+) + 2 CO2. Functionally, catalyzes the reaction of cyanate with bicarbonate to produce ammonia and carbon dioxide. This Marinomonas sp. (strain MWYL1) protein is Cyanate hydratase.